We begin with the raw amino-acid sequence, 64 residues long: Small ribosomal subunit protein bS21 (64 aa).

Belongs to the bacterial ribosomal protein bS21 family.

The sequence is that of Small ribosomal subunit protein bS21 from Flavobacterium johnsoniae (strain ATCC 17061 / DSM 2064 / JCM 8514 / BCRC 14874 / CCUG 350202 / NBRC 14942 / NCIMB 11054 / UW101) (Cytophaga johnsonae).